Here is a 330-residue protein sequence, read N- to C-terminus: Inactive serine protease 45 (330 aa).

Residues 1–35 form the signal peptide; sequence MATSLRLLDAGPGSLRRWIPTCFAALLLLPPRPNL. One can recognise a Peptidase S1 domain in the interval 45 to 291; it reads VCGAPWWSDS…YTGWIKEQVS (247 aa). Disulfide bonds link C75–C91, C172–C249, C207–C230, and C239–C267. Residue N272 is glycosylated (N-linked (GlcNAc...) asparagine).

It belongs to the peptidase S1 family.

It localises to the secreted. The polypeptide is Inactive serine protease 45 (Prss45) (Rattus norvegicus (Rat)).